Consider the following 273-residue polypeptide: Thioredoxin-like 1-3, chloroplastic (273 aa).

The N-terminal 44 residues, 1–44 (MATDSFIKLNPISFNRARFDLRDFAGISPKSISSLCCISPRLIS), are a transit peptide targeting the chloroplast. The 141-residue stretch at 62-202 (LFSKKKIPAF…FKEALEKHGR (141 aa)) folds into the Thioredoxin domain. Residues C125 and C128 each act as nucleophile in the active site. A disulfide bond links C125 and C128.

This sequence belongs to the thioredoxin family.

The protein localises to the plastid. It is found in the chloroplast. Functionally, probable thiol-disulfide oxidoreductase that may participate in various redox reactions. This is Thioredoxin-like 1-3, chloroplastic from Arabidopsis thaliana (Mouse-ear cress).